The following is a 105-amino-acid chain: Met repressor (105 aa).

It belongs to the MetJ family. As to quaternary structure, homodimer.

The protein localises to the cytoplasm. Its function is as follows. This regulatory protein, when combined with SAM (S-adenosylmethionine) represses the expression of the methionine regulon and of enzymes involved in SAM synthesis. The sequence is that of Met repressor from Photorhabdus laumondii subsp. laumondii (strain DSM 15139 / CIP 105565 / TT01) (Photorhabdus luminescens subsp. laumondii).